Here is a 431-residue protein sequence, read N- to C-terminus: Ornithine decarboxylase (431 aa).

Lysine 94 carries the N6-(pyridoxal phosphate)lysine modification. Residues serine 226, glycine 264, and 297-300 (EPGR) contribute to the pyridoxal 5'-phosphate site. 340 to 341 (YD) contributes to the substrate binding site. Cysteine 376 functions as the Proton donor; shared with dimeric partner in the catalytic mechanism. Aspartate 377 is a binding site for substrate. Position 405 (tyrosine 405) interacts with pyridoxal 5'-phosphate.

It belongs to the Orn/Lys/Arg decarboxylase class-II family. As to quaternary structure, homodimer. Only the dimer is catalytically active, as the active sites are constructed of residues from both monomers. Requires pyridoxal 5'-phosphate as cofactor.

The catalysed reaction is L-ornithine + H(+) = putrescine + CO2. It functions in the pathway amine and polyamine biosynthesis; putrescine biosynthesis via L-ornithine pathway; putrescine from L-ornithine: step 1/1. With respect to regulation, inhibited by antizyme (AZ) in response to polyamine levels. AZ inhibits the assembly of the functional homodimer by binding to ODC monomers and targeting them for ubiquitin-independent proteolytic destruction by the 26S proteasome. Catalyzes the first and rate-limiting step of polyamine biosynthesis that converts ornithine into putrescine, which is the precursor for the polyamines, spermidine and spermine. Polyamines are essential for cell proliferation and are implicated in cellular processes, ranging from DNA replication to apoptosis. The protein is Ornithine decarboxylase of Datura stramonium (Jimsonweed).